A 167-amino-acid chain; its full sequence is Endoribonuclease YbeY (167 aa).

Zn(2+)-binding residues include His131, His135, and His141.

The protein belongs to the endoribonuclease YbeY family. It depends on Zn(2+) as a cofactor.

It is found in the cytoplasm. Its function is as follows. Single strand-specific metallo-endoribonuclease involved in late-stage 70S ribosome quality control and in maturation of the 3' terminus of the 16S rRNA. The protein is Endoribonuclease YbeY of Rickettsia conorii (strain ATCC VR-613 / Malish 7).